Reading from the N-terminus, the 80-residue chain is Omega-conotoxin-like 1 (80 aa).

Residues 1-22 (MKLTCVLIVVVLFLTACQLITT) form the signal peptide. Positions 23-49 (DDSTGKQRYQAWKLRSKMQNSVLSRLS) are excised as a propeptide. Cystine bridges form between Cys-52–Cys-66, Cys-59–Cys-70, and Cys-65–Cys-79.

This sequence belongs to the conotoxin O1 superfamily. Peptide predicted to begin at Arg-51, but it seems more probable that it begins at Cys-52, since this position corresponds to a dibasic residue cleavage. As to expression, expressed by the venom duct.

It is found in the secreted. In terms of biological role, omega-conotoxins act at presynaptic membranes, they bind and block voltage-gated calcium channels (Cav). In Conus capitaneus (Captain cone), this protein is Omega-conotoxin-like 1.